The primary structure comprises 75 residues: MSGCNCGSSCNCGDSCKCNKRSSGLNYVEAETTETVILGVGPAKIQFEDAEMGVAAEDSGCKCGSSCTCDPCNCK.

The protein belongs to the metallothionein superfamily. Type 15 family.

Its function is as follows. Metallothioneins have a high content of cysteine residues that bind various heavy metals. The sequence is that of Metallothionein-like protein 1 (MT1B) from Trifolium repens (Creeping white clover).